The sequence spans 636 residues: Dehydrogenase ARMGADRAFT_1018426 (636 aa).

The N-terminal stretch at 1 to 19 (MPALTYLLLAAIGASTVHS) is a signal peptide. FAD contacts are provided by residues 49 to 50 (TA) and 70 to 71 (EG). N99 is a glycosylation site (N-linked (GlcNAc...) asparagine). FAD-binding positions include W104 and 134–137 (NGLT). N-linked (GlcNAc...) asparagine glycosylation occurs at N253. FAD is bound at residue V280. Residues N333, N380, N394, and N498 are each glycosylated (N-linked (GlcNAc...) asparagine). H570 functions as the Proton acceptor in the catalytic mechanism. FAD contacts are provided by residues A603 and 614-615 (PS).

It belongs to the GMC oxidoreductase family. The cofactor is FAD.

Its pathway is secondary metabolite biosynthesis. In terms of biological role, dehydrogenase, part of the gene cluster that mediates the biosynthesis of melleolides, a range of antifungal and phytotoxic polyketide derivatives composed of an orsellinic acid (OA) moiety esterified to various sesquiterpene alcohols. The first step in melleolides biosynthesis is performed by the delta(6)-protoilludene synthase PRO1 which catalyzes the cyclization of farnesyl diphosphate to protoilludene. The orsellinic acid synthase armB produces OA by condensing acetyl-CoA with 3 malonyl-CoA units in a three-round chain elongation reaction folowed by a C2-C7 ring closure. ArmB further catalyzes the trans-esterification of OA to the various sesquiterpene alcohols resulting from the hydroxylation of protoilludene. The melleolides cluster also includes 5 cytochrome P450 monooxygenases, 4 NAD(+)-dependent oxidoreductases, one flavin-dependent oxidoreductase, and one O-methyltransferase. The cytochrome P450 monooxygenases may be involved in protoilludene hydroxylation to elaborate melleolides with multiple alcohol groups, such as melleolide D, which carries alcohol functionalities at C-4, C-5, C-10, and C-13. The role of the NAD(+)-dependent enzymes remains unknown. Numerous melleolides, including arnamial, show 5'-O-methylation of the aromatic moiety which may be catalyzed by the methyltransferase encoded in the cluster. The flavin-dependent oxidoreductase might represent the dehydrogenase yielding the aldehyde in position 1 of arnamial and other melleolides. Finally, several halogenase localized outside of the cluster, are able to catalyze the transfer of a single chlorine atom to the melleolide backbone, resulting in a 6'-chloromelleolide product. This Armillaria gallica (Bulbous honey fungus) protein is Dehydrogenase ARMGADRAFT_1018426.